A 133-amino-acid polypeptide reads, in one-letter code: Large ribosomal subunit protein bL19 (133 aa).

Belongs to the bacterial ribosomal protein bL19 family.

In terms of biological role, this protein is located at the 30S-50S ribosomal subunit interface and may play a role in the structure and function of the aminoacyl-tRNA binding site. This chain is Large ribosomal subunit protein bL19, found in Stenotrophomonas maltophilia (strain K279a).